The following is a 332-amino-acid chain: MNTILEKLYQSEVLTQVESQQLFTAIITGQLAPTQLAAALIAMKVRGETPQEIAGAATALLADAKPFPRPDYPFADIVGTGGDGSNSINISTSSAFVAAACGVKVAKHGNRSVSSQSGSSDLLAAFGISLDLPAEQARQALDELNVCFLFAPQYHSGFRHAMPVRKELKTRTIFNVLGPLINPARPPLAVIGVYSPQLVLPIAETLKMLGYQRAAVVHGGGMDEVALHSATQVAELRDGEITRYQLTPDDFGLSSHPQEALAGGSPEENRDILTRLLQGKGQLAHEEAVAANVALLLKMFGHEDLRDNAQRALATIRSGKAWQHVAALAERG.

Residues glycine 79, 82-83 (GD), serine 87, 89-92 (NIST), 107-115 (KHGNRSVSS), and serine 119 contribute to the 5-phospho-alpha-D-ribose 1-diphosphate site. Glycine 79 provides a ligand contact to anthranilate. Mg(2+) is bound at residue serine 91. Residue asparagine 110 coordinates anthranilate. Arginine 165 contacts anthranilate. Mg(2+)-binding residues include aspartate 223 and glutamate 224.

This sequence belongs to the anthranilate phosphoribosyltransferase family. As to quaternary structure, homodimer. Mg(2+) is required as a cofactor.

It carries out the reaction N-(5-phospho-beta-D-ribosyl)anthranilate + diphosphate = 5-phospho-alpha-D-ribose 1-diphosphate + anthranilate. The protein operates within amino-acid biosynthesis; L-tryptophan biosynthesis; L-tryptophan from chorismate: step 2/5. In terms of biological role, catalyzes the transfer of the phosphoribosyl group of 5-phosphorylribose-1-pyrophosphate (PRPP) to anthranilate to yield N-(5'-phosphoribosyl)-anthranilate (PRA). The sequence is that of Anthranilate phosphoribosyltransferase from Erwinia tasmaniensis (strain DSM 17950 / CFBP 7177 / CIP 109463 / NCPPB 4357 / Et1/99).